Consider the following 435-residue polypeptide: MDTWEDDRVDQRACLICGDRATGLHYGIISCEGCKGFFKRSICNKRVYRCSRDKNCVMSRKQRNRCQYCRLLKCLQMGMNRKAIREDGMPGGRNKSIGPVQISDEEVERIMSGQEFEEEANTSWSNNGDSDHSSPGNAVSESNQPSPVSTPSSSRSMELNGFSSLRDQYLGTPGPTHYQYLPHLFSFSAHPTIIPAQSRSLDPQSHTLINQLLTAEDIEPLNTPMLIEDGYKVTQSELFALLCRLADELLFRQITWVKKLPFFCDLSIKDYTCLLSTTWQELILLSSITTYSKQIFGDLTDVTSKYSPSEDELHRFSEDGMEVMERLIYLFRKFSQLKVSNEEYVCMKAINFLNQDIQGISSASQVEQLNKRYWYVCQDFTEYRYPHQPNRFPDLMMCLPEVRYIAGKLVNVPLEQLPLLFKAFLHSCKTIVTKE.

The nuclear receptor DNA-binding region spans 11-86 (QRACLICGDR…MGMNRKAIRE (76 aa)). 2 NR C4-type zinc fingers span residues 14 to 34 (CLIC…CEGC) and 50 to 69 (CSRD…CQYC). The segment at 84-158 (IREDGMPGGR…STPSSSRSME (75 aa)) is disordered. Polar residues predominate over residues 121-141 (NTSWSNNGDSDHSSPGNAVSE). A compositionally biased stretch (low complexity) spans 142–156 (SNQPSPVSTPSSSRS). In terms of domain architecture, NR LBD spans 204-435 (QSHTLINQLL…HSCKTIVTKE (232 aa)).

Belongs to the nuclear hormone receptor family. NR6 subfamily. Homodimer. Transiently expressed in differentiating cells of all embryonic germ layers. Expressed in an anterior to posterior concentration gradient from late gastrula to midneurula stages. Shows a complicated spatio-temporal pattern of expression during neurulation, being predominant in the neural plate and neural crest in midneurula embryos. At late tailbud (stage 30), mainly expressed in the head mesenchyme, gill arches and tail tip. Expression persists in the epidermis, somites and endoderm, and in the central nervous system, expression is restricted to the midbrain, hindbrain and part of the spinal cord. Isoforms Oo and Em are both expressed in the brain and isoform Oo is expressed in the germ cells of both the adult testis and ovary.

Its subcellular location is the cytoplasm. The protein localises to the nucleus. Functionally, probable orphan nuclear receptor. Binds to a response element containing repeats of the motif 5'-AGGTCA-3'. Required for anterior-posterior patterning during organogenesis. Acts with chordin to play a role in patterning the midbrain-hindbrain. Isoform Em is required for integrin-mediated cell matrix interaction during neurulation and for the morphogenetic movements leading to formation of the neural tube. Also mediates the effect of retinoic acid on primary neurogenesis. In Xenopus laevis (African clawed frog), this protein is Nuclear receptor subfamily 6 group A member 1.